Here is a 634-residue protein sequence, read N- to C-terminus: ATP-dependent zinc metalloprotease FtsH (634 aa).

Residues 1 to 5 lie on the Cytoplasmic side of the membrane; that stretch reads MNALK. Residues 6–26 form a helical membrane-spanning segment; it reads NFFIWAIIIGAAIVAFNLFEG. Over 27 to 100 the chain is Periplasmic; sequence KREFTTKVSL…VANPEPPGGW (74 aa). Residues 101-121 form a helical membrane-spanning segment; it reads LVNVFLSWLPILFFIGIWIFL. Topologically, residues 122–634 are cytoplasmic; sequence LRQMSGGGNV…KSEEVKEEVV (513 aa). 195-202 is an ATP binding site; sequence GEPGVGKT. His-418 contacts Zn(2+). The active site involves Glu-419. The Zn(2+) site is built by His-422 and Asp-496. Positions 615–634 are disordered; it reads DRKSEENKELKSEEVKEEVV.

It in the central section; belongs to the AAA ATPase family. The protein in the C-terminal section; belongs to the peptidase M41 family. The isolated protease domain (residues 405-634) forms a stable hexamer. Requires Zn(2+) as cofactor.

It is found in the cell inner membrane. In terms of biological role, acts as a processive, ATP-dependent zinc metallopeptidase for both cytoplasmic and membrane proteins. Plays a role in the quality control of integral membrane proteins. This chain is ATP-dependent zinc metalloprotease FtsH, found in Aquifex aeolicus (strain VF5).